We begin with the raw amino-acid sequence, 254 residues long: NAD-dependent protein deacylase (254 aa).

Positions 1-250 (MERLEEARKR…LPPSPEDQAE (250 aa)) constitute a Deacetylase sirtuin-type domain. 22–41 (GAGISKPSGIPTFRDAEGLW) lines the NAD(+) pocket. Substrate-binding residues include tyrosine 66 and arginine 69. 104–107 (QNVD) lines the NAD(+) pocket. The active-site Proton acceptor is histidine 122. Residues cysteine 130, cysteine 133, cysteine 149, and cysteine 152 each contribute to the Zn(2+) site. NAD(+)-binding positions include 189–191 (GTS), 215–217 (NPE), and alanine 233.

Belongs to the sirtuin family. Class III subfamily. Requires Zn(2+) as cofactor.

Its subcellular location is the cytoplasm. The catalysed reaction is N(6)-acetyl-L-lysyl-[protein] + NAD(+) + H2O = 2''-O-acetyl-ADP-D-ribose + nicotinamide + L-lysyl-[protein]. The enzyme catalyses N(6)-succinyl-L-lysyl-[protein] + NAD(+) + H2O = 2''-O-succinyl-ADP-D-ribose + nicotinamide + L-lysyl-[protein]. NAD-dependent lysine deacetylase and desuccinylase that specifically removes acetyl and succinyl groups on target proteins. Modulates the activities of several proteins which are inactive in their acylated form. This chain is NAD-dependent protein deacylase, found in Thermus thermophilus (strain ATCC 27634 / DSM 579 / HB8).